The following is a 195-amino-acid chain: Imidazoleglycerol-phosphate dehydratase (195 aa).

It belongs to the imidazoleglycerol-phosphate dehydratase family.

Its subcellular location is the cytoplasm. The catalysed reaction is D-erythro-1-(imidazol-4-yl)glycerol 3-phosphate = 3-(imidazol-4-yl)-2-oxopropyl phosphate + H2O. The protein operates within amino-acid biosynthesis; L-histidine biosynthesis; L-histidine from 5-phospho-alpha-D-ribose 1-diphosphate: step 6/9. The protein is Imidazoleglycerol-phosphate dehydratase of Geobacillus thermodenitrificans (strain NG80-2).